The following is a 122-amino-acid chain: Small ribosomal subunit protein uS13 (122 aa).

The tract at residues 94–122 is disordered; the sequence is GLPVRGQSTQKNARTRKGPRKTVAGKKGK. A compositionally biased stretch (basic residues) spans 106 to 122; sequence ARTRKGPRKTVAGKKGK.

The protein belongs to the universal ribosomal protein uS13 family. Part of the 30S ribosomal subunit. Forms a loose heterodimer with protein S19. Forms two bridges to the 50S subunit in the 70S ribosome.

In terms of biological role, located at the top of the head of the 30S subunit, it contacts several helices of the 16S rRNA. In the 70S ribosome it contacts the 23S rRNA (bridge B1a) and protein L5 of the 50S subunit (bridge B1b), connecting the 2 subunits; these bridges are implicated in subunit movement. Contacts the tRNAs in the A and P-sites. The protein is Small ribosomal subunit protein uS13 of Mycoplasmopsis synoviae (strain 53) (Mycoplasma synoviae).